Here is a 344-residue protein sequence, read N- to C-terminus: Homoserine O-acetyltransferase (344 aa).

C142 functions as the Acyl-thioester intermediate in the catalytic mechanism. Substrate contacts are provided by K163 and S192. H235 (proton acceptor) is an active-site residue. E237 is a catalytic residue. R249 is a binding site for substrate.

Belongs to the MetA family.

The protein resides in the cytoplasm. It carries out the reaction L-homoserine + acetyl-CoA = O-acetyl-L-homoserine + CoA. The protein operates within amino-acid biosynthesis; L-methionine biosynthesis via de novo pathway; O-acetyl-L-homoserine from L-homoserine: step 1/1. Its function is as follows. Transfers an acetyl group from acetyl-CoA to L-homoserine, forming acetyl-L-homoserine. In Bifidobacterium adolescentis (strain ATCC 15703 / DSM 20083 / NCTC 11814 / E194a), this protein is Homoserine O-acetyltransferase.